A 319-amino-acid chain; its full sequence is Beta-sarcoglycan (319 aa).

Residues 1-10 (MAAAAAAAAA) show a composition bias toward low complexity. Residues 1 to 33 (MAAAAAAAAAEQQSSNGPVKKSMREKAVERRNV) form a disordered region. The Cytoplasmic portion of the chain corresponds to 1–66 (MAAAAAAAAA…GLRGRKGNLA (66 aa)). The segment covering 22-33 (SMREKAVERRNV) has biased composition (basic and acidic residues). A helical; Signal-anchor for type II membrane protein membrane pass occupies residues 67–87 (ICVIILLFILAVINLIITLVI). Over 88-318 (WAVIRIGPNG…QISDNPCGNT (231 aa)) the chain is Extracellular. N-linked (GlcNAc...) asparagine glycans are attached at residues Asn159, Asn212, and Asn259. Disulfide bonds link Cys289/Cys315 and Cys291/Cys308.

This sequence belongs to the sarcoglycan beta/delta/gamma/zeta family. In terms of assembly, cross-link to form 2 major subcomplexes: one consisting of SGCB, SGCD and SGCG and the other consisting of SGCB and SGCD. The association between SGCB and SGCG is particularly strong while SGCA is loosely associated with the other sarcoglycans. In terms of processing, disulfide bonds are present.

It is found in the cell membrane. The protein localises to the sarcolemma. Its subcellular location is the cytoplasm. It localises to the cytoskeleton. Its function is as follows. Component of the sarcoglycan complex, a subcomplex of the dystrophin-glycoprotein complex which forms a link between the F-actin cytoskeleton and the extracellular matrix. This is Beta-sarcoglycan (SGCB) from Pongo abelii (Sumatran orangutan).